A 433-amino-acid polypeptide reads, in one-letter code: Pyrimidine-nucleoside phosphorylase (433 aa).

Position 81–83 (81–83 (KHS)) interacts with phosphate. K(+) contacts are provided by G88 and T90. Residues T92, 108 to 110 (KMS), and T120 each bind phosphate. Substrate-binding residues include R168 and K187. Residues L243, A246, and E255 each coordinate K(+).

The protein belongs to the thymidine/pyrimidine-nucleoside phosphorylase family. As to quaternary structure, homodimer. K(+) is required as a cofactor.

It carries out the reaction uridine + phosphate = alpha-D-ribose 1-phosphate + uracil. The catalysed reaction is thymidine + phosphate = 2-deoxy-alpha-D-ribose 1-phosphate + thymine. The enzyme catalyses 2'-deoxyuridine + phosphate = 2-deoxy-alpha-D-ribose 1-phosphate + uracil. Functionally, catalyzes phosphorolysis of the pyrimidine nucleosides uridine, thymidine and 2'-deoxyuridine with the formation of the corresponding pyrimidine base and ribose-1-phosphate. The chain is Pyrimidine-nucleoside phosphorylase (pdp) from Staphylococcus aureus (strain NCTC 8325 / PS 47).